The chain runs to 458 residues: BUD13 homolog (458 aa).

3 disordered regions span residues Ser-16–Arg-37, Lys-81–Leu-328, and Ala-437–Glu-458. Basic and acidic residues predominate over residues Asn-138–Pro-148. Basic residues-rich tracts occupy residues Arg-175–Arg-185 and Pro-208–Arg-218. Composition is skewed to basic and acidic residues over residues Arg-219 to Glu-243, Arg-266 to Glu-284, and Asp-314 to Leu-328. Positions Leu-262 to Ala-356 form a coiled coil.

It belongs to the CWC26 family.

This is BUD13 homolog from Caenorhabditis elegans.